Here is a 502-residue protein sequence, read N- to C-terminus: Arabinose import ATP-binding protein AraG (502 aa).

ABC transporter domains lie at 6 to 241 and 252 to 497; these read LEFD…MVGR and REVG…MVES. An ATP-binding site is contributed by 38 to 45; it reads GENGAGKS.

This sequence belongs to the ABC transporter superfamily. Arabinose importer (TC 3.A.1.2.2) family. In terms of assembly, the complex is composed of two ATP-binding proteins (AraG), two transmembrane proteins (AraH) and a solute-binding protein (AraF).

Its subcellular location is the cell inner membrane. The enzyme catalyses L-arabinose(out) + ATP + H2O = L-arabinose(in) + ADP + phosphate + H(+). In terms of biological role, part of the ABC transporter complex AraFGH involved in arabinose import. Responsible for energy coupling to the transport system. In Mannheimia succiniciproducens (strain KCTC 0769BP / MBEL55E), this protein is Arabinose import ATP-binding protein AraG.